We begin with the raw amino-acid sequence, 879 residues long: MADLAPKYNPNEVEKGRYQEWLDEDLFKPSGDKKAHPYSIVIPPPNVTGKLHLGHAWDTAIQDTLIRFKRMQGYDTLYLPGMDHAGIATQAKVEAKLRTQGKDRHEMGREAFVKQVWDWKDEYASIIKSQWAKMGLSLDYSRERFTLDKGLSKAVRKVFVQLYNEGLIYRGEYIINWDPKLETALSDIEVIHKDDKGAFYHIKYPFADGSGFVEIATTRPETMFGDTAVAVAPGDERYKDIVGKELVLPLVGRHIPIIEDQHVDPEFGTGLVKITPAHDPNDFQVGNRHNLERINVMNDNGTMNEEAGKYAGMDRFEAREALVKDLKEEGFLIKVEPIVHSVGHSERSGVQVEPRLSKQWFVKMKPLAEKVLENQKTDDKVNFVPERFEHTLEQWMSDVHDWVISRQLWWGHRIPAWYNKKTGETYVGLEAPKDSENWEQDPDVLDTWFSSALWPFSTLGWPDENSEDFKRYFPTNTLVTGYDIIFFWVSRMIFQSLHFTGKRPFDDVVLHGLIRDPQGRKMSKSLGNGVDPMDVVDEYGADALRWFLLNGTAPGQDTRYDPKKMGAAWNFINKIWNASRFVIMNLPEDAKPAHMPDTSKFDLADSWIFDRLNHTVSEVTRLFDEYQFGEAGRELYNFIWNDFCDWYIEISKVALNGDDEELKTRKQENLIWILDQILRLLHPIMPFVTEKLWLSMPHDGKSIMVAKYPETHKEFENKEADSQMAFLIEVIKAVRNIRMEVNAPMSSPIDIMIQIDDDNNKAVLDNNAEYVENFLHPKALSVAADIEAPKLAKTAVIPGAQIFVPLTELVNVDEELAKMEKEEKRLEAEVERAEKKLSNQGFVAHAPEAVINKEKEKKADYESQLAGVRERMKELKESK.

The short motif at Pro45–His55 is the 'HIGH' region element. A 'KMSKS' region motif is present at residues Lys521–Ser525. Lys524 is a binding site for ATP. Residues Leu806 to Lys879 are a coiled coil.

This sequence belongs to the class-I aminoacyl-tRNA synthetase family. ValS type 1 subfamily. Monomer.

Its subcellular location is the cytoplasm. It catalyses the reaction tRNA(Val) + L-valine + ATP = L-valyl-tRNA(Val) + AMP + diphosphate. Catalyzes the attachment of valine to tRNA(Val). As ValRS can inadvertently accommodate and process structurally similar amino acids such as threonine, to avoid such errors, it has a 'posttransfer' editing activity that hydrolyzes mischarged Thr-tRNA(Val) in a tRNA-dependent manner. The polypeptide is Valine--tRNA ligase (Lactobacillus johnsonii (strain CNCM I-12250 / La1 / NCC 533)).